We begin with the raw amino-acid sequence, 530 residues long: UDP-glucuronosyltransferase 2B17 (530 aa).

The first 23 residues, 1-23, serve as a signal peptide directing secretion; it reads MSLKWMSVFLLMQLSCYFSSGSC. Asparagine 65 is a glycosylation site (N-linked (GlcNAc...) asparagine). The residue at position 136 (lysine 136) is an N6-succinyllysine. Residues asparagine 316 and asparagine 483 are each glycosylated (N-linked (GlcNAc...) asparagine). Residues 495–515 traverse the membrane as a helical segment; it reads IAFLLACVATMIFMITKCCLF.

It belongs to the UDP-glycosyltransferase family. As to expression, expressed in various tissues including the liver, kidney, testis, uterus, placenta, mammary gland, adrenal gland, skin and prostate.

It localises to the endoplasmic reticulum membrane. The catalysed reaction is glucuronate acceptor + UDP-alpha-D-glucuronate = acceptor beta-D-glucuronoside + UDP + H(+). It carries out the reaction 17alpha-estradiol + UDP-alpha-D-glucuronate = 17alpha-estradiol 3-O-(beta-D-glucuronate) + UDP + H(+). The enzyme catalyses 17alpha-estradiol + UDP-alpha-D-glucuronate = 17alpha-estradiol 17-O-(beta-D-glucuronate) + UDP + H(+). It catalyses the reaction 17beta-estradiol + UDP-alpha-D-glucuronate = 17beta-estradiol 17-O-(beta-D-glucuronate) + UDP + H(+). The catalysed reaction is 17beta-hydroxy-5alpha-androstan-3-one + UDP-alpha-D-glucuronate = 5alpha-dihydrotestosterone 17-O-(beta-D-glucuronate) + UDP + H(+). It carries out the reaction testosterone + UDP-alpha-D-glucuronate = testosterone 17-O-(beta-D-glucuronate) + UDP + H(+). In terms of biological role, UDP-glucuronosyltransferase (UGT) that catalyzes phase II biotransformation reactions in which lipophilic substrates are conjugated with glucuronic acid to increase the metabolite's water solubility, thereby facilitating excretion into either the urine or bile. Catalyzes the glucuronidation of endogenous steroid hormones such as androgens (epitestosterone, androsterone) and estrogens (estradiol, epiestradiol). In Homo sapiens (Human), this protein is UDP-glucuronosyltransferase 2B17.